Reading from the N-terminus, the 245-residue chain is Biosynthetic peptidoglycan transglycosylase (245 aa).

A helical membrane pass occupies residues 24–44 (LVVIGAWLAGILLFSFLPVPF).

Belongs to the glycosyltransferase 51 family.

It localises to the cell inner membrane. It carries out the reaction [GlcNAc-(1-&gt;4)-Mur2Ac(oyl-L-Ala-gamma-D-Glu-L-Lys-D-Ala-D-Ala)](n)-di-trans,octa-cis-undecaprenyl diphosphate + beta-D-GlcNAc-(1-&gt;4)-Mur2Ac(oyl-L-Ala-gamma-D-Glu-L-Lys-D-Ala-D-Ala)-di-trans,octa-cis-undecaprenyl diphosphate = [GlcNAc-(1-&gt;4)-Mur2Ac(oyl-L-Ala-gamma-D-Glu-L-Lys-D-Ala-D-Ala)](n+1)-di-trans,octa-cis-undecaprenyl diphosphate + di-trans,octa-cis-undecaprenyl diphosphate + H(+). It functions in the pathway cell wall biogenesis; peptidoglycan biosynthesis. Peptidoglycan polymerase that catalyzes glycan chain elongation from lipid-linked precursors. The sequence is that of Biosynthetic peptidoglycan transglycosylase from Pectobacterium atrosepticum (strain SCRI 1043 / ATCC BAA-672) (Erwinia carotovora subsp. atroseptica).